Here is a 365-residue protein sequence, read N- to C-terminus: Probable dual-specificity RNA methyltransferase RlmN (365 aa).

The active-site Proton acceptor is the Glu111. A Radical SAM core domain is found at 117–351 (ADDRMTACIS…VNIRRSRGKD (235 aa)). Cys124 and Cys356 are joined by a disulfide. Residues Cys131, Cys135, and Cys138 each coordinate [4Fe-4S] cluster. S-adenosyl-L-methionine contacts are provided by residues 182–183 (GE), Ser214, 237–239 (SLH), and Asn313. Residue Cys356 is the S-methylcysteine intermediate of the active site.

This sequence belongs to the radical SAM superfamily. RlmN family. It depends on [4Fe-4S] cluster as a cofactor.

The protein resides in the cytoplasm. The enzyme catalyses adenosine(2503) in 23S rRNA + 2 reduced [2Fe-2S]-[ferredoxin] + 2 S-adenosyl-L-methionine = 2-methyladenosine(2503) in 23S rRNA + 5'-deoxyadenosine + L-methionine + 2 oxidized [2Fe-2S]-[ferredoxin] + S-adenosyl-L-homocysteine. The catalysed reaction is adenosine(37) in tRNA + 2 reduced [2Fe-2S]-[ferredoxin] + 2 S-adenosyl-L-methionine = 2-methyladenosine(37) in tRNA + 5'-deoxyadenosine + L-methionine + 2 oxidized [2Fe-2S]-[ferredoxin] + S-adenosyl-L-homocysteine. Specifically methylates position 2 of adenine 2503 in 23S rRNA and position 2 of adenine 37 in tRNAs. The protein is Probable dual-specificity RNA methyltransferase RlmN of Cytophaga hutchinsonii (strain ATCC 33406 / DSM 1761 / CIP 103989 / NBRC 15051 / NCIMB 9469 / D465).